A 273-amino-acid polypeptide reads, in one-letter code: Large ribosomal subunit protein uL29m (273 aa).

The segment covering 247-258 (PLRHDRWEKGQE) has biased composition (basic and acidic residues). A disordered region spans residues 247–273 (PLRHDRWEKGQEENSGGETEDGNAPSN).

Belongs to the universal ribosomal protein uL29 family. In terms of assembly, component of the mitochondrial large ribosomal subunit. Mature mitochondrial ribosomes consist of a small (37S) and a large (54S) subunit. The 37S subunit contains at least 33 different proteins and 1 molecule of RNA (15S). The 54S subunit contains at least 45 different proteins and 1 molecule of RNA (21S).

The protein resides in the mitochondrion. This is Large ribosomal subunit protein uL29m (mrpl4) from Aspergillus niger (strain ATCC MYA-4892 / CBS 513.88 / FGSC A1513).